The chain runs to 158 residues: Dysbindin domain-containing protein 2 (158 aa).

The tract at residues 79–158 (FLPCEESSPA…DGGAEPGPCS (80 aa)) is disordered. The segment covering 106–131 (PTSDRTTSRTSSLSSDSSNLRSPNPS) has biased composition (low complexity). Phosphoserine is present on residues S119 and S120. T137 is modified (phosphothreonine). Position 142 is a phosphoserine (S142). Acidic residues predominate over residues 142–151 (SDEEDGDDGG).

Belongs to the dysbindin family. As to quaternary structure, monomer. Interacts with CSNK1D and CSNK1E.

Functionally, may modulate the activity of casein kinase-1. Inhibits CSNK1D autophosphorylation (in vitro). The chain is Dysbindin domain-containing protein 2 (Dbndd2) from Mus musculus (Mouse).